Reading from the N-terminus, the 551-residue chain is Protein GPR107 (551 aa).

A signal peptide spans 1–33 (MAVRVPLGCTGSFCPRLLPLLALLELLVDPSLG). At 34–262 (RVHHLALKDD…YLSAGEIPLP (229 aa)) the chain is on the extracellular side. N64 carries N-linked (GlcNAc...) asparagine glycosylation. Residues 127-183 (GVKVRSPPEAGKQLPEIVFSKDEKVPSRSQEPAVSSNPKDSKVQRTPDGSKAQRSTV) are disordered. Positions 153-164 (SRSQEPAVSSNP) are enriched in polar residues. N209 is a glycosylation site (N-linked (GlcNAc...) asparagine). The chain crosses the membrane as a helical span at residues 263–283 (KLYVSMALLFFLSGTVWIHIL). Over 284 to 292 (RKRRNDVFK) the chain is Cytoplasmic. Residues 293–313 (IHWLMAALPFTKSLSLVFHAI) traverse the membrane as a helical segment. The Extracellular segment spans residues 314–336 (DYHYISSQGFPIEGWAVVYYITH). A helical membrane pass occupies residues 337–357 (LLKGALLFITIALIGTGWAFI). Residues 358–367 (KHILSDKDKK) are Cytoplasmic-facing. The chain crosses the membrane as a helical span at residues 368–388 (IFMIVIPLQVLANVAYIIIES). At 389 to 401 (TEEGTTEYGLWKD) the chain is on the extracellular side. The chain crosses the membrane as a helical span at residues 402–422 (SLFLVDLLCCGAILFPVVWSI). Topologically, residues 423–443 (RHLQEASATDGKAAINLAKLK) are cytoplasmic. Residues 444–466 (LFRHYYVLIVCYIYFTRIIAFLL) form a helical membrane-spanning segment. Residues 467-475 (KFAVPFQWK) are Extracellular-facing. A helical membrane pass occupies residues 476–495 (WLYQLLDETATLVFFVLTGY). Over 496–551 (KFRPASDNPYLQLSQEEDDLEMESVVTTSGVMENMKKVKKVSNGAVEPQGSWEGTA) the chain is Cytoplasmic.

The protein belongs to the LU7TM family. In terms of processing, cleaved by FURIN to yield two fragments that remain associated via a disulfide bond. In terms of tissue distribution, widely expressed. Not detected in the duodenum, nor in the exocrine pancreas.

It localises to the cell membrane. The protein localises to the golgi apparatus. It is found in the trans-Golgi network membrane. Functionally, has been proposed to act as a receptor for neuronostatin, a peptide derived from the somatostatin/SST precursor. Involved in blood sugar regulation through the induction of glucagon in response to low glucose. The chain is Protein GPR107 (Gpr107) from Rattus norvegicus (Rat).